Here is a 999-residue protein sequence, read N- to C-terminus: MAATVRRQRPRRLLCWALVAVLLADLLALSDTLAVMSVDLGSESMKVAIVKPGVPMEIVLNKESRRKTPVTVTLKENERFLGDSAAGMAIKNPKATLRYFQHLLGKQADNPHVALYRSRFPEHELNVDPQRQTVRFQISPQLQFSPEEVLGMVLNYSRSLAEDFAEQPIKDAVITVPAFFNQAERRAVLQAARMAGLKVLQLINDNTATALSYGVFRRKDINSTAQNIMFYDMGSGSTVCTIVTYQTVKTKEAGTQPQLQIRGVGFDRTLGGLEMELRLREHLAKLFNEQRKGQKAKDVRENPRAMAKLLREANRLKTVLSANADHMAQIEGLMDDVDFKAKVTRVEFEELCADLFDRVPGPVQQALQSAEMSLDQIEQVILVGGPTRVPKVQEVLLKPVGKEELGKNINADEAAAMGAVYQAAALSKAFKVKPFVVRDAVIYPILVEFTREVEEEPGLRSLKHNKRVLFSRMGPYPQRKVITFNRYSHDFNFHINYGDLGFLGPEDLRVFGSQNLTTVKLKGVGESFKKYPDYESKGIKAHFNLDESGVLSLDRVESVFETLVEDSPEEESTLTKLGNTISSLFGGGTSSDAKENGTDAVQEEEESPAEGSKDEPAEQGELKEEAEAPMEDTSQPPPSEPKGDAAREGETPDEKESGDKSEAQKPNEKGQAGPEGVPPAPEEEKKQKPARKQKMVEEIGVELAVLDLPDLPEDELAHSVQKLEDLTLRDLEKQEREKAANSLEAFIFETQDKLYQPEYQEVSTEEQREEISGKLSATSTWLEDEGFGATTVMLKDKLAELRKLCQGLFFRVEERRKWPERLSALDNLLNHSSIFLKGARLIPEMDQIFTDVEMTTLEKVINDTWTWKNATLAEQAKLPATEKPVLLSKDIEAKMMALDREVQYLLNKAKFTKPRPRPKDKNGTRTEPPLNASAGDQEEKVIPPTGQTEEAKAILEPDKEGLGTEAADSEPLELGGPGAESEQAEQTAGQKRPLKNDEL.

The signal sequence occupies residues 1–32 (MAATVRRQRPRRLLCWALVAVLLADLLALSDT). 3 N-linked (GlcNAc...) asparagine glycosylation sites follow: N155, N222, and N515. Positions 564–694 (VEDSPEEEST…KKQKPARKQK (131 aa)) are disordered. The residue at position 567 (S567) is a Phosphoserine. A compositionally biased stretch (polar residues) spans 574-583 (LTKLGNTISS). The N-linked (GlcNAc...) asparagine glycan is linked to N596. 2 stretches are compositionally biased toward basic and acidic residues: residues 611–626 (GSKD…KEEA) and 641–668 (PKGD…KPNE). N-linked (GlcNAc...) asparagine glycans are attached at residues N830, N862, and N869. Position 883 is an N6-acetyllysine (K883). The tract at residues 909 to 999 (AKFTKPRPRP…QKRPLKNDEL (91 aa)) is disordered. N-linked (GlcNAc...) asparagine glycans are attached at residues N922 and N931. A compositionally biased stretch (basic and acidic residues) spans 949-962 (EEAKAILEPDKEGL). The short motif at 996-999 (NDEL) is the Prevents secretion from ER element.

It belongs to the heat shock protein 70 family. Part of a large chaperone multiprotein complex comprising DNAJB11, HSP90B1, HSPA5, HYOU, PDIA2, PDIA4, PDIA6, PPIB, SDF2L1, UGGT1 and very small amounts of ERP29, but not, or at very low levels, CALR nor CANX. Selectively expressed by cultured astrocytes but not endothelial cells, microglia or neurons.

The protein localises to the endoplasmic reticulum lumen. In terms of biological role, has a pivotal role in cytoprotective cellular mechanisms triggered by oxygen deprivation. Promotes HSPA5/BiP-mediated ATP nucleotide exchange and thereby activates the unfolded protein response (UPR) pathway in the presence of endoplasmic reticulum stress. May play a role as a molecular chaperone and participate in protein folding. This Rattus norvegicus (Rat) protein is Hypoxia up-regulated protein 1 (Hyou1).